A 627-amino-acid polypeptide reads, in one-letter code: MACPF domain-containing protein At1g14780 (627 aa).

One can recognise an MACPF domain in the interval 1–339; the sequence is MSRDGGDVIE…PPLMDLQYFL (339 aa).

This sequence belongs to the complement C6/C7/C8/C9 (TC 1.C.39) family.

Negatively controls the salicylic acid (SA)-mediated pathway of programmed cell death in plant immunity. This Arabidopsis thaliana (Mouse-ear cress) protein is MACPF domain-containing protein At1g14780.